Here is a 451-residue protein sequence, read N- to C-terminus: tRNA modification GTPase MnmE (451 aa).

Residues arginine 37, glutamate 95, and lysine 135 each contribute to the (6S)-5-formyl-5,6,7,8-tetrahydrofolate site. A TrmE-type G domain is found at 232–376 (GLSIVIMGPP…LVEAIADFAG (145 aa)). K(+) is bound at residue asparagine 242. GTP is bound by residues 242 to 247 (NAGKST), 261 to 267 (SEIAGTT), and 286 to 289 (DTAG). Residue serine 246 participates in Mg(2+) binding. K(+)-binding residues include serine 261, isoleucine 263, and threonine 266. Residue threonine 267 participates in Mg(2+) binding. Residue lysine 451 participates in (6S)-5-formyl-5,6,7,8-tetrahydrofolate binding.

Belongs to the TRAFAC class TrmE-Era-EngA-EngB-Septin-like GTPase superfamily. TrmE GTPase family. Homodimer. Heterotetramer of two MnmE and two MnmG subunits. Requires K(+) as cofactor.

It localises to the cytoplasm. Exhibits a very high intrinsic GTPase hydrolysis rate. Involved in the addition of a carboxymethylaminomethyl (cmnm) group at the wobble position (U34) of certain tRNAs, forming tRNA-cmnm(5)s(2)U34. In Beijerinckia indica subsp. indica (strain ATCC 9039 / DSM 1715 / NCIMB 8712), this protein is tRNA modification GTPase MnmE.